Reading from the N-terminus, the 232-residue chain is A-type ATP synthase subunit D (232 aa).

The protein belongs to the V-ATPase D subunit family. Has multiple subunits with at least A(3), B(3), C, D, E, F, H, I and proteolipid K(x).

It localises to the cell membrane. Its function is as follows. Component of the A-type ATP synthase that produces ATP from ADP in the presence of a proton gradient across the membrane. This is A-type ATP synthase subunit D from Methanopyrus kandleri (strain AV19 / DSM 6324 / JCM 9639 / NBRC 100938).